We begin with the raw amino-acid sequence, 246 residues long: MASATQLTHRGIHLAGLYRSSWSKPLFRHLATKPILYSYWPSSCSWRVRVALAIKKIDYDIKPTSLLKTVSGHAYTDEYREVNPMQKVPSLKIDGHTLCDSVAIIHYLEETRPQPALLPQDPVKRAKIREIVELICSGIQPLQNVSVLDHIGKDQSLQWAQHWISRGFQGLEKVLSHSAGKFCVGDELSMADICLVPQVRNARRYKADLTPYPTIVRLNQELQELDVFKATHPSTQPDCPPEFAKK.

The 85-residue stretch at 32–116 (TKPILYSYWP…YLEETRPQPA (85 aa)) folds into the GST N-terminal domain. Glutathione-binding positions include 42-47 (SSCSWR), V88, 100-101 (DS), Q140, and 144-146 (NVS). The GST C-terminal domain maps to 121 to 241 (DPVKRAKIRE…HPSTQPDCPP (121 aa)).

This sequence belongs to the GST superfamily. Zeta family. Glutathione serves as cofactor.

The protein localises to the cytoplasm. It catalyses the reaction 4-maleylacetoacetate = 4-fumarylacetoacetate. The enzyme catalyses RX + glutathione = an S-substituted glutathione + a halide anion + H(+). It participates in amino-acid degradation; L-phenylalanine degradation; acetoacetate and fumarate from L-phenylalanine: step 5/6. Catalyzes the glutathione dependent oxygenation of dichloroacetic acid to glyoxylic acid in vitro. Possesses low glutathione thioltransferase activity toward 4-hydroxynonenal (4-HNE). Has no glutathione thioltransferase activity with adrenochrome, phenethyl isothiocyanate (PEITC), 5-hydroperoxyeicosatetraenoic acid ((5S)-HpETE), prostaglandin A2 (PGA2) or 2-hydroxyethyldisulfide (HED). The sequence is that of Probable maleylacetoacetate isomerase 1 (GstZ1) from Drosophila melanogaster (Fruit fly).